The chain runs to 135 residues: Calcium-binding protein KIC (135 aa).

In terms of domain architecture, EF-hand spans 74 to 109; that stretch reads MSKEDAQGMVREGDLDGDGALNQTEFCVLMVRLSPE. The Ca(2+) site is built by Asp-87, Asp-89, Asp-91, and Glu-98.

As to quaternary structure, interacts with KCBP (via C-terminus). KIC and calmodulin show competitive binding to KCBP. Interacts with CML42. Binds to ABCG36. Expressed in stems, leaves and flowers.

In terms of biological role, calcium-binding regulatory protein that interacts with kinesin motor protein KCBP in a calcium-dependent manner. Inhibits KCBP microtubule binding activity and microtubule-stimulated ATPase activity. Involved in the regulation of trichome branching through its interaction with KCBP. In Arabidopsis thaliana (Mouse-ear cress), this protein is Calcium-binding protein KIC.